We begin with the raw amino-acid sequence, 123 residues long: Highly acidic elicitin 20 (123 aa).

Positions 1–20 (MQFTALFAATAVALVGSVSA) are cleaved as a signal peptide. 3 disulfides stabilise this stretch: cysteine 23–cysteine 91, cysteine 47–cysteine 76, and cysteine 71–cysteine 115.

Belongs to the elicitin family.

The protein resides in the secreted. Its function is as follows. Induces local and distal defense responses (incompatible hypersensitive reaction) in plants from the solanaceae and cruciferae families. Elicits leaf necrosis and causes the accumulation of pathogenesis-related proteins. Might interact with the lipidic molecules of the plasma membrane. The sequence is that of Highly acidic elicitin 20 (B20) from Phytophthora cryptogea.